We begin with the raw amino-acid sequence, 237 residues long: 2,3-bisphosphoglycerate-dependent phosphoglycerate mutase (237 aa).

Residues 8–15 (RHGQSQWN), 21–22 (TG), arginine 60, 87–90 (ERHY), lysine 98, 114–115 (RR), and 180–181 (GN) each bind substrate. Histidine 9 functions as the Tele-phosphohistidine intermediate in the catalytic mechanism. The Proton donor/acceptor role is filled by glutamate 87.

It belongs to the phosphoglycerate mutase family. BPG-dependent PGAM subfamily. Homodimer.

It carries out the reaction (2R)-2-phosphoglycerate = (2R)-3-phosphoglycerate. It participates in carbohydrate degradation; glycolysis; pyruvate from D-glyceraldehyde 3-phosphate: step 3/5. In terms of biological role, catalyzes the interconversion of 2-phosphoglycerate and 3-phosphoglycerate. This is 2,3-bisphosphoglycerate-dependent phosphoglycerate mutase from Caulobacter vibrioides (strain ATCC 19089 / CIP 103742 / CB 15) (Caulobacter crescentus).